We begin with the raw amino-acid sequence, 372 residues long: Rab9 effector protein with kelch motifs (372 aa).

Kelch repeat units lie at residues 49–95 (KVFI…FLPS), 100–146 (SIWV…TSSA), 151–203 (HLYV…AAGT), 204–250 (KLFI…AAVA), and 254–303 (HVYV…VIPW). The segment at 321 to 342 (LQDEKGDAAEKPETRSGGSREE) is disordered. A compositionally biased stretch (basic and acidic residues) spans 322–342 (QDEKGDAAEKPETRSGGSREE). Residues 349-372 (LCFVFGGMNTEGEIYDDCLVTVVD) form a Kelch 6 repeat.

As to quaternary structure, interacts with PIKFYVE; the interaction recruits RABEPK to the endosomal membrane. Interacts with RAB9 in its GTP-bound conformation. Phosphorylated on Ser residues by PIKFYVE.

Its subcellular location is the cytoplasm. The protein resides in the endosome membrane. Rab9 effector required for endosome to trans-Golgi network (TGN) transport. The protein is Rab9 effector protein with kelch motifs (Rabepk) of Rattus norvegicus (Rat).